The sequence spans 319 residues: Acetyl-coenzyme A carboxylase carboxyl transferase subunit alpha (319 aa).

The region spanning 39-293 (RLQKKSNDLT…KAVLEKQLHE (255 aa)) is the CoA carboxyltransferase C-terminal domain.

This sequence belongs to the AccA family. Acetyl-CoA carboxylase is a heterohexamer composed of biotin carboxyl carrier protein (AccB), biotin carboxylase (AccC) and two subunits each of ACCase subunit alpha (AccA) and ACCase subunit beta (AccD).

The protein resides in the cytoplasm. It carries out the reaction N(6)-carboxybiotinyl-L-lysyl-[protein] + acetyl-CoA = N(6)-biotinyl-L-lysyl-[protein] + malonyl-CoA. It functions in the pathway lipid metabolism; malonyl-CoA biosynthesis; malonyl-CoA from acetyl-CoA: step 1/1. In terms of biological role, component of the acetyl coenzyme A carboxylase (ACC) complex. First, biotin carboxylase catalyzes the carboxylation of biotin on its carrier protein (BCCP) and then the CO(2) group is transferred by the carboxyltransferase to acetyl-CoA to form malonyl-CoA. This chain is Acetyl-coenzyme A carboxylase carboxyl transferase subunit alpha, found in Neisseria meningitidis serogroup C (strain 053442).